The following is a 1146-amino-acid chain: MADQIPLYPVRSAGAAASHRRAAYYSSAGPGPGADRRGRYQLEDESAHLDEMPLMMSEEGFENDESDYHTLPRARITRRKRGLEWFVCGGWKFLCTSCCDWLINVCQRKKELKARTVWLGCPEKCEEKHPRNSIKNQKYNVFTFIPGVLYEQFKFFLNLYFLVVSCSQFVPALKIGYLYTYWAPLGFVLAVTIAREAIDEFRRFQRDKEMNSQLYSKLTVRGKVQVKSSDIQVGDLIIVEKNQRIPSDMVFLRTSEKAGSCFIRTDQLDGETDWKLKVAVSCTQRLPALGDLFSISAYVYAQKPQLDIHSFEGTFTREDSDPPIHESLSIENTLWASTIVASGTVIGVVIYTGKETRSVMNTSNPNNKVGLLDLELNQLTKALFLALVVLSVVMVTLQGFAGPWYRNLFRFLLLFSYIIPISLRVNLDMGKAAYGWMIMKDENIPGTVVRTSTIPEELGRLVYLLTDKTGTLTQNEMVFKRLHLGTVSYGTDTMDEIQSHVLNSYLQVHSQPSGHNPSSAPLRRSQSSTPKVKKSVSSRIHEAVKAIALCHNVTPVYEARAGITGETEFAEADQDFSDENRTYQASSPDEVALVRWTESVGLTLVSRDLASMQLKTPSGQVLTYCILQMFPFTSESKRMGIIVRDESTAEITFYMKGADVAMSTIVQYNDWLEEECGNMAREGLRTLVVAKRTLTEEQYQDFESRYSQAKLSIHDRALKVAAVVESLEREMELLCLTGVEDQLQADVRPTLEMLRNAGIKIWMLTGDKLETATCIAKSSHLVSRTQDIHVFRPVTSRGEAHLELNAFRRKHDCALVISGDSLEVCLRYYEHELVELACQCPAVVCCRCSPTQKAHIVTLLRQHTRKRTCAIGDGGNDVSMIQAADCGIGIEGKEGKQASLAADFSITQFRHIGRLLMVHGRNSYKRSAALGQFVMHRGLIISTMQAVFSSVFYFASVPLYQGFLMVGYATIYTMFPVFSLVLDQDVKPEMAILYPELYKDLTKGRSLSFKTFLIWVLISIYQGGILMYGALLLFEDEFVHVVAISFTALILTELLMVALTIRTWHWLMVVAEFLSLGCYVASLAFLNEYFGIGRVSFGAFLDVAFITTVTFLWKVSAITVVSCLPLYVLKYLKRKLSPPSYSKLSS.

Over 1 to 143 the chain is Cytoplasmic; the sequence is MADQIPLYPV…IKNQKYNVFT (143 aa). A helical membrane pass occupies residues 144-164; that stretch reads FIPGVLYEQFKFFLNLYFLVV. The Extracellular portion of the chain corresponds to 165–172; the sequence is SCSQFVPA. Residues 173–193 traverse the membrane as a helical segment; it reads LKIGYLYTYWAPLGFVLAVTI. The Cytoplasmic portion of the chain corresponds to 194–381; that stretch reads AREAIDEFRR…LDLELNQLTK (188 aa). A helical transmembrane segment spans residues 382–402; the sequence is ALFLALVVLSVVMVTLQGFAG. The Extracellular portion of the chain corresponds to 403 to 407; sequence PWYRN. The chain crosses the membrane as a helical span at residues 408 to 427; it reads LFRFLLLFSYIIPISLRVNL. At 428 to 938 the chain is on the cytoplasmic side; it reads DMGKAAYGWM…ALGQFVMHRG (511 aa). Aspartate 467 acts as the 4-aspartylphosphate intermediate in catalysis. 3 residues coordinate ATP: aspartate 467, lysine 468, and threonine 469. Aspartate 467 serves as a coordination point for Mg(2+). Threonine 469 serves as a coordination point for Mg(2+). A compositionally biased stretch (polar residues) spans 508-519; the sequence is VHSQPSGHNPSS. The disordered stretch occupies residues 508–535; the sequence is VHSQPSGHNPSSAPLRRSQSSTPKVKKS. Positions 590, 632, 637, 656, 685, 686, 765, 766, 767, 847, and 853 each coordinate ATP. A Mg(2+)-binding site is contributed by aspartate 873. Residues asparagine 876 and aspartate 877 each coordinate ATP. Aspartate 877 is a Mg(2+) binding site. The chain crosses the membrane as a helical span at residues 939 to 959; the sequence is LIISTMQAVFSSVFYFASVPL. Over 960-961 the chain is Extracellular; it reads YQ. Residues 962–982 traverse the membrane as a helical segment; sequence GFLMVGYATIYTMFPVFSLVL. Residues 983–1011 lie on the Cytoplasmic side of the membrane; that stretch reads DQDVKPEMAILYPELYKDLTKGRSLSFKT. Residues 1012 to 1032 form a helical membrane-spanning segment; it reads FLIWVLISIYQGGILMYGALL. Residues 1033 to 1040 lie on the Extracellular side of the membrane; sequence LFEDEFVH. The helical transmembrane segment at 1041-1061 threads the bilayer; it reads VVAISFTALILTELLMVALTI. The Cytoplasmic portion of the chain corresponds to 1062-1065; it reads RTWH. Residues 1066–1086 traverse the membrane as a helical segment; the sequence is WLMVVAEFLSLGCYVASLAFL. Over 1087–1105 the chain is Extracellular; sequence NEYFGIGRVSFGAFLDVAF. A helical membrane pass occupies residues 1106-1128; it reads ITTVTFLWKVSAITVVSCLPLYV. The Cytoplasmic segment spans residues 1129-1146; that stretch reads LKYLKRKLSPPSYSKLSS.

Belongs to the cation transport ATPase (P-type) (TC 3.A.3) family. Type IV subfamily. Requires Mg(2+) as cofactor. In terms of tissue distribution, found in most tissues except spleen and muscle. Most abundant in testis. Also detected in fetal tissues.

Its subcellular location is the golgi apparatus. The protein resides in the trans-Golgi network membrane. It catalyses the reaction ATP + H2O + phospholipidSide 1 = ADP + phosphate + phospholipidSide 2.. This is Probable phospholipid-transporting ATPase IIB (Atp9b) from Mus musculus (Mouse).